Reading from the N-terminus, the 518-residue chain is FAD-dependent monooxygenase tpcD (518 aa).

Positions 1-22 (MQLLGTLSWLYAIQASIGSSKA) are cleaved as a signal peptide. N61 carries an N-linked (GlcNAc...) asparagine glycan. The FAD-binding PCMH-type domain maps to 75 to 246 (QSAQPACLVH…TRFDLDVFQQ (172 aa)). Pros-8alpha-FAD histidine is present on H112. 4 N-linked (GlcNAc...) asparagine glycosylation sites follow: N163, N208, N216, and N346.

Belongs to the oxygen-dependent FAD-linked oxidoreductase family. Requires FAD as cofactor.

It functions in the pathway secondary metabolite biosynthesis; terpenoid biosynthesis. FAD-dependent monooxygenase; part of the gene cluster that mediates the biosynthesis of terpestacin. The bifunctional terpene synthase tpcA converts isopentenyl diphosphate (IPP) and dimethylallyl diphosphate (DMAPP) into the sesterterpene preterpestacin I. The C-terminal prenyltransferase (PT) domain of tpcA catalyzes formation of GFPP, whereas the N-terminal terpene cyclase (TC) domain catalyzes the cyclization of GFPP into preterpestacin I. The cytochrome P450 monooxygenase tpcB then hydroxylates preterpestacin I to yield 24-hydroxypreterpstacin I (renamed as preterpestacin II) whereas the cytochrome P450 monooxygenase tpcC further hydroxylates preterpestacin II to yield 16,17-dihydroxypreterpestacin II (renamed as preterpestacin III). Finally, the FAD-dependent monooxygenase tpcD converts preterpestacin III into terpestacin. The polypeptide is FAD-dependent monooxygenase tpcD (Cochliobolus heterostrophus (strain C5 / ATCC 48332 / race O) (Southern corn leaf blight fungus)).